Here is a 297-residue protein sequence, read N- to C-terminus: Light-independent protochlorophyllide reductase iron-sulfur ATP-binding protein (297 aa).

Residues 41–46 and Lys-70 contribute to the ATP site; that span reads GIGKST. Residue Ser-45 coordinates Mg(2+). The [4Fe-4S] cluster site is built by Cys-126 and Cys-160. ATP is bound by residues 211 to 212 and 235 to 237; these read NR and PDL.

Belongs to the NifH/BchL/ChlL family. As to quaternary structure, homodimer. Protochlorophyllide reductase is composed of three subunits; BchL, BchN and BchB. [4Fe-4S] cluster serves as cofactor.

The catalysed reaction is chlorophyllide a + oxidized 2[4Fe-4S]-[ferredoxin] + 2 ADP + 2 phosphate = protochlorophyllide a + reduced 2[4Fe-4S]-[ferredoxin] + 2 ATP + 2 H2O. It functions in the pathway porphyrin-containing compound metabolism; bacteriochlorophyll biosynthesis (light-independent). In terms of biological role, component of the dark-operative protochlorophyllide reductase (DPOR) that uses Mg-ATP and reduced ferredoxin to reduce ring D of protochlorophyllide (Pchlide) to form chlorophyllide a (Chlide). This reaction is light-independent. The L component serves as a unique electron donor to the NB-component of the complex, and binds Mg-ATP. This is Light-independent protochlorophyllide reductase iron-sulfur ATP-binding protein from Methylorubrum extorquens (strain PA1) (Methylobacterium extorquens).